A 733-amino-acid polypeptide reads, in one-letter code: FYVE, RhoGEF and PH domain-containing protein 3 (733 aa).

3 stretches are compositionally biased toward polar residues: residues 1 to 11 (MELGRSSSTPQ), 47 to 60 (HSSS…STRE), and 106 to 117 (ETASDSRVPQDN). The segment at 1–134 (MELGRSSSTP…GVGEEPDPKV (134 aa)) is disordered. Acidic residues predominate over residues 118-129 (PQEEEDSGVGEE). S124 bears the Phosphoserine mark. The DH domain occupies 153-337 (KLLHIAQELL…STAADHSNAA (185 aa)). One can recognise a PH 1 domain in the interval 366 to 465 (ELIKEGSIQK…WIQVIQATVE (100 aa)). The disordered stretch occupies residues 481-535 (CSQDEEPTLSPDQPVMSTSSVEPAGVADSNGGTPGIESRKSSSKTRRDKEKPGCK). Positions 517–533 (ESRKSSSKTRRDKEKPG) are enriched in basic and acidic residues. The FYVE-type zinc-finger motif lies at 528–584 (DKEKPGCKSCGETFNSITKRRYRCKLCGEVICRKCSEFKAENSKQSRVCRECFLEEP). 8 residues coordinate Zn(2+): C534, C537, C551, C554, C559, C562, C576, and C579. Disordered stretches follow at residues 586–612 (VPPS…DPRP) and 712–733 (GDTA…TDTP). A PH 2 domain is found at 612 to 711 (PSLLCGTLNL…WLKALGTAVH (100 aa)). Residue T732 is modified to Phosphothreonine.

In terms of tissue distribution, detected in adult brain, spleen, lung and skeletal muscle. Detected in embryos from 7 dpc to 17 dpc.

Its subcellular location is the cytoplasm. It localises to the cytoskeleton. In terms of biological role, promotes the formation of filopodia. May activate CDC42, a member of the Ras-like family of Rho- and Rac proteins, by exchanging bound GDP for free GTP. Plays a role in regulating the actin cytoskeleton and cell shape. The sequence is that of FYVE, RhoGEF and PH domain-containing protein 3 (Fgd3) from Mus musculus (Mouse).